The following is a 238-amino-acid chain: tRNA (guanine-N(7)-)-methyltransferase (238 aa).

S-adenosyl-L-methionine-binding residues include E71, E96, D123, and D146. Residue D146 is part of the active site. Substrate contacts are provided by residues K150, D182, and 217–220 (TKFE).

The protein belongs to the class I-like SAM-binding methyltransferase superfamily. TrmB family.

It carries out the reaction guanosine(46) in tRNA + S-adenosyl-L-methionine = N(7)-methylguanosine(46) in tRNA + S-adenosyl-L-homocysteine. Its pathway is tRNA modification; N(7)-methylguanine-tRNA biosynthesis. Catalyzes the formation of N(7)-methylguanine at position 46 (m7G46) in tRNA. In Methylobacillus flagellatus (strain ATCC 51484 / DSM 6875 / VKM B-1610 / KT), this protein is tRNA (guanine-N(7)-)-methyltransferase.